The following is a 437-amino-acid chain: Adenylosuccinate synthetase (437 aa).

GTP is bound by residues 12–18 (GDEGKGK) and 40–42 (GHT). Catalysis depends on Asp-13, which acts as the Proton acceptor. The Mg(2+) site is built by Asp-13 and Gly-40. Residues 13-16 (DEGK), 38-41 (NAGH), Thr-128, Arg-142, Gln-223, Thr-238, and Arg-302 contribute to the IMP site. Residue His-41 is the Proton donor of the active site. Position 298–304 (298–304 (TTTGRKR)) interacts with substrate. GTP contacts are provided by residues Arg-304, 330–332 (KLD), and 412–414 (SLG).

This sequence belongs to the adenylosuccinate synthetase family. In terms of assembly, homodimer. It depends on Mg(2+) as a cofactor.

The protein localises to the cytoplasm. It catalyses the reaction IMP + L-aspartate + GTP = N(6)-(1,2-dicarboxyethyl)-AMP + GDP + phosphate + 2 H(+). The protein operates within purine metabolism; AMP biosynthesis via de novo pathway; AMP from IMP: step 1/2. Its function is as follows. Plays an important role in the de novo pathway of purine nucleotide biosynthesis. Catalyzes the first committed step in the biosynthesis of AMP from IMP. The polypeptide is Adenylosuccinate synthetase (Trichodesmium erythraeum (strain IMS101)).